Consider the following 59-residue polypeptide: UPF0434 protein VIBHAR_01537 (59 aa).

It belongs to the UPF0434 family.

The protein is UPF0434 protein VIBHAR_01537 of Vibrio campbellii (strain ATCC BAA-1116).